Consider the following 117-residue polypeptide: Putative iron-sulfur cluster insertion protein ErpA (117 aa).

C45, C109, and C111 together coordinate iron-sulfur cluster.

It belongs to the HesB/IscA family. As to quaternary structure, homodimer. Iron-sulfur cluster serves as cofactor.

Required for insertion of 4Fe-4S clusters. This is Putative iron-sulfur cluster insertion protein ErpA from Methylobacillus flagellatus (strain ATCC 51484 / DSM 6875 / VKM B-1610 / KT).